We begin with the raw amino-acid sequence, 495 residues long: B3 domain-containing protein Os01g0234100 (495 aa).

Disordered regions lie at residues methionine 1–glutamine 25 and proline 88–glutamate 108. Residues glutamine 92–glutamate 108 show a composition bias toward polar residues. Residues phenylalanine 152–lysine 243 constitute a DNA-binding region (TF-B3). The span at glutamate 268–threonine 282 shows a compositional bias: basic and acidic residues. The tract at residues glutamate 268 to valine 289 is disordered.

It localises to the nucleus. This chain is B3 domain-containing protein Os01g0234100, found in Oryza sativa subsp. japonica (Rice).